The primary structure comprises 1380 residues: DNA-directed RNA polymerase subunit beta (1380 aa).

This sequence belongs to the RNA polymerase beta chain family. As to quaternary structure, the RNAP catalytic core consists of 2 alpha, 1 beta, 1 beta' and 1 omega subunit. When a sigma factor is associated with the core the holoenzyme is formed, which can initiate transcription.

It carries out the reaction RNA(n) + a ribonucleoside 5'-triphosphate = RNA(n+1) + diphosphate. DNA-dependent RNA polymerase catalyzes the transcription of DNA into RNA using the four ribonucleoside triphosphates as substrates. This chain is DNA-directed RNA polymerase subunit beta, found in Sinorhizobium medicae (strain WSM419) (Ensifer medicae).